The primary structure comprises 356 residues: Uroporphyrinogen decarboxylase (356 aa).

Substrate-binding positions include 23–27, aspartate 72, tyrosine 148, serine 203, and histidine 321; that span reads RQAGR.

It belongs to the uroporphyrinogen decarboxylase family. In terms of assembly, homodimer.

The protein localises to the cytoplasm. The enzyme catalyses uroporphyrinogen III + 4 H(+) = coproporphyrinogen III + 4 CO2. It functions in the pathway porphyrin-containing compound metabolism; protoporphyrin-IX biosynthesis; coproporphyrinogen-III from 5-aminolevulinate: step 4/4. Functionally, catalyzes the decarboxylation of four acetate groups of uroporphyrinogen-III to yield coproporphyrinogen-III. The sequence is that of Uroporphyrinogen decarboxylase from Chloroflexus aggregans (strain MD-66 / DSM 9485).